Here is a 363-residue protein sequence, read N- to C-terminus: MNAKTYEALETMQKRLFQIQKDLEDENILKDIKKFTELNKEKANLEEVVEKFVEYKKAVDHIKDAKAILENEKDSELIELAKIELDENNDKVEHLQQVIEEMLLPKDPNDEKNVIIEIRGAAGGDEANIFAGDLLRMYKLYAETQNWKINILEASLGEAGGYSQVVFMIKGDRVYSKLKFESGAHRVQRVPKTEAKGRIQTSTATVAVLPEMSEVEIEIRSNDLRIDTYRASGAGGQHVNTTDSAVRITHLPTGIVVTSQDGRSQHDNKDIAMTMLRAKVYEAEVEKQQAQADATRKNAVGTGARSEKIRTYNYPQNRVTDHRVGLTLNKLDQVMEGNIDEFIIALINEEQRQKVAEQLKNNE.

An N5-methylglutamine modification is found at Gln237.

It belongs to the prokaryotic/mitochondrial release factor family. Post-translationally, methylated by PrmC. Methylation increases the termination efficiency of RF1.

Its subcellular location is the cytoplasm. In terms of biological role, peptide chain release factor 1 directs the termination of translation in response to the peptide chain termination codons UAG and UAA. The chain is Peptide chain release factor 1 (prfA) from Mycoplasma capricolum subsp. capricolum (strain California kid / ATCC 27343 / NCTC 10154).